The sequence spans 249 residues: Adenylate kinase (249 aa).

An ATP-binding site is contributed by 43–48; that stretch reads GAGKGT. Residues 63–92 are NMP; it reads ATGDMLRAQVAAKTALGVEAKKIMDQGGLV. AMP-binding positions include threonine 64, arginine 69, 90–92, 119–122, and glutamine 126; these read GLV and GFPR. The interval 160–197 is LID; that stretch reads GRLVHPASGRSYHKLFNPPKKDMTDDVTGEPLVQRSDD. ATP is bound by residues arginine 161 and 170–171; that span reads SY. The tract at residues 177–197 is disordered; the sequence is PPKKDMTDDVTGEPLVQRSDD. AMP contacts are provided by arginine 194 and arginine 205. An ATP-binding site is contributed by glutamine 233.

It belongs to the adenylate kinase family. AK2 subfamily. Monomer.

It localises to the cytoplasm. The protein localises to the cytosol. Its subcellular location is the mitochondrion intermembrane space. The enzyme catalyses AMP + ATP = 2 ADP. Functionally, catalyzes the reversible transfer of the terminal phosphate group between ATP and AMP. Plays an important role in cellular energy homeostasis and in adenine nucleotide metabolism. Adenylate kinase activity is critical for regulation of the phosphate utilization and the AMP de novo biosynthesis pathways. This Candida albicans (strain SC5314 / ATCC MYA-2876) (Yeast) protein is Adenylate kinase.